The primary structure comprises 247 residues: Protein GrpE (247 aa).

Disordered stretches follow at residues 1–64 (MNDE…QALD) and 214–247 (SMGP…EKSD). 3 stretches are compositionally biased toward polar residues: residues 30–39 (DEPSLSNVAE), 49–63 (DVTS…SQAL), and 228–241 (TEQS…TDQQ).

The protein belongs to the GrpE family. In terms of assembly, homodimer.

It is found in the cytoplasm. Functionally, participates actively in the response to hyperosmotic and heat shock by preventing the aggregation of stress-denatured proteins, in association with DnaK and GrpE. It is the nucleotide exchange factor for DnaK and may function as a thermosensor. Unfolded proteins bind initially to DnaJ; upon interaction with the DnaJ-bound protein, DnaK hydrolyzes its bound ATP, resulting in the formation of a stable complex. GrpE releases ADP from DnaK; ATP binding to DnaK triggers the release of the substrate protein, thus completing the reaction cycle. Several rounds of ATP-dependent interactions between DnaJ, DnaK and GrpE are required for fully efficient folding. The chain is Protein GrpE from Prochlorococcus marinus (strain MIT 9211).